The sequence spans 143 residues: Small ribosomal subunit protein bS6 (143 aa).

The tract at residues 96-143 (VTEASPMAAAKEERRDDRREVKKDVAAAPVEAKEDSVEEKSEEAASEE) is disordered. Basic and acidic residues predominate over residues 105–143 (AKEERRDDRREVKKDVAAAPVEAKEDSVEEKSEEAASEE).

The protein belongs to the bacterial ribosomal protein bS6 family.

Functionally, binds together with bS18 to 16S ribosomal RNA. The sequence is that of Small ribosomal subunit protein bS6 from Colwellia psychrerythraea (strain 34H / ATCC BAA-681) (Vibrio psychroerythus).